The following is a 132-amino-acid chain: Small ribosomal subunit protein uS11 (132 aa).

This sequence belongs to the universal ribosomal protein uS11 family. In terms of assembly, part of the 30S ribosomal subunit. Interacts with proteins S7 and S18. Binds to IF-3.

Its function is as follows. Located on the platform of the 30S subunit, it bridges several disparate RNA helices of the 16S rRNA. Forms part of the Shine-Dalgarno cleft in the 70S ribosome. The polypeptide is Small ribosomal subunit protein uS11 (Clostridium kluyveri (strain NBRC 12016)).